The following is a 131-amino-acid chain: Large ribosomal subunit protein eL32 (131 aa).

The protein belongs to the eukaryotic ribosomal protein eL32 family. As to quaternary structure, component of the large ribosomal subunit (LSU). Mature N.crassa ribosomes consist of a small (40S) and a large (60S) subunit. The 40S small subunit contains 1 molecule of ribosomal RNA (18S rRNA) and at least 32 different proteins. The large 60S subunit contains 3 rRNA molecules (26S, 5.8S and 5S rRNA) and at least 42 different proteins.

The protein resides in the cytoplasm. In terms of biological role, component of the ribosome, a large ribonucleoprotein complex responsible for the synthesis of proteins in the cell. The small ribosomal subunit (SSU) binds messenger RNAs (mRNAs) and translates the encoded message by selecting cognate aminoacyl-transfer RNA (tRNA) molecules. The large subunit (LSU) contains the ribosomal catalytic site termed the peptidyl transferase center (PTC), which catalyzes the formation of peptide bonds, thereby polymerizing the amino acids delivered by tRNAs into a polypeptide chain. The nascent polypeptides leave the ribosome through a tunnel in the LSU and interact with protein factors that function in enzymatic processing, targeting, and the membrane insertion of nascent chains at the exit of the ribosomal tunnel. The polypeptide is Large ribosomal subunit protein eL32 (crp-63) (Neurospora crassa (strain ATCC 24698 / 74-OR23-1A / CBS 708.71 / DSM 1257 / FGSC 987)).